The chain runs to 203 residues: Corrinoid adenosyltransferase (203 aa).

Residues 1-21 (MNESPEKDQRHRERMERKKAV) form a disordered region. 41-47 (GNGKGKS) serves as a coordination point for ATP.

It belongs to the Cob(I)alamin adenosyltransferase family. As to quaternary structure, monomer. Requires Mn(2+) as cofactor.

The protein resides in the cytoplasm. It carries out the reaction 2 cob(II)yrinate a,c diamide + reduced [electron-transfer flavoprotein] + 2 ATP = 2 adenosylcob(III)yrinate a,c-diamide + 2 triphosphate + oxidized [electron-transfer flavoprotein] + 3 H(+). It catalyses the reaction 2 cob(II)alamin + reduced [electron-transfer flavoprotein] + 2 ATP = 2 adenosylcob(III)alamin + 2 triphosphate + oxidized [electron-transfer flavoprotein] + 3 H(+). It functions in the pathway cofactor biosynthesis; adenosylcobalamin biosynthesis; adenosylcobalamin from cob(II)yrinate a,c-diamide: step 2/7. In terms of biological role, required for both de novo synthesis of the corrin ring for the assimilation of exogenous corrinoids. Participates in the adenosylation of a variety of incomplete and complete corrinoids. The sequence is that of Corrinoid adenosyltransferase (cobO) from Pseudomonas aeruginosa (strain ATCC 15692 / DSM 22644 / CIP 104116 / JCM 14847 / LMG 12228 / 1C / PRS 101 / PAO1).